Here is a 474-residue protein sequence, read N- to C-terminus: H/ACA ribonucleoprotein complex subunit CBF5 (474 aa).

The active-site Nucleophile is the Asp94. Residues Tyr265–Met340 enclose the PUA domain. 2 disordered regions span residues Gln356–Glu375 and Asn390–Lys474. Composition is skewed to basic and acidic residues over residues Met361–Arg372 and Lys400–Asp433. 9 consecutive repeat copies span residues Lys431–Asp433, Lys434–Glu436, Lys437–Glu439, Lys440–Asp442, Lys443–Glu445, Lys446–Glu448, Lys449–Glu451, Lys452–Glu454, and Lys455–Arg457. The 9 X 3 AA tandem repeats of K-K-[DE] stretch occupies residues Lys431–Asp460. Over residues Lys434–Lys456 the composition is skewed to basic residues.

This sequence belongs to the pseudouridine synthase TruB family. In terms of assembly, component of the small nucleolar ribonucleoprotein particles containing H/ACA-type snoRNAs (H/ACA snoRNPs).

The protein resides in the nucleus. Its subcellular location is the nucleolus. It catalyses the reaction uridine in 5S rRNA = pseudouridine in 5S rRNA. It carries out the reaction uridine in snRNA = pseudouridine in snRNA. The enzyme catalyses a uridine in mRNA = a pseudouridine in mRNA. Catalytic subunit of H/ACA small nucleolar ribonucleoprotein (H/ACA snoRNP) complex, which catalyzes pseudouridylation of rRNA. This involves the isomerization of uridine such that the ribose is subsequently attached to C5, instead of the normal N1. Pseudouridine ('psi') residues may serve to stabilize the conformation of rRNAs and play a central role in ribosomal RNA processing. The H/ACA snoRNP complex also mediates pseudouridylation of other types of RNAs. Catalyzes pseudouridylation at position 93 in U2 snRNA. Also catalyzes pseudouridylation of mRNAs; H/ACA-type snoRNAs probably guide pseudouridylation of mRNAs. The protein is H/ACA ribonucleoprotein complex subunit CBF5 (CBF5) of Kluyveromyces lactis (strain ATCC 8585 / CBS 2359 / DSM 70799 / NBRC 1267 / NRRL Y-1140 / WM37) (Yeast).